Reading from the N-terminus, the 318-residue chain is Biotin synthase (318 aa).

Positions 36 to 258 (HDPREVQLCT…VATTRILFPD (223 aa)) constitute a Radical SAM core domain. Cys-54, Cys-58, and Cys-61 together coordinate [4Fe-4S] cluster. [2Fe-2S] cluster contacts are provided by Cys-98, Cys-130, Cys-190, and Arg-262.

It belongs to the radical SAM superfamily. Biotin synthase family. Homodimer. Requires [4Fe-4S] cluster as cofactor. It depends on [2Fe-2S] cluster as a cofactor.

The enzyme catalyses (4R,5S)-dethiobiotin + (sulfur carrier)-SH + 2 reduced [2Fe-2S]-[ferredoxin] + 2 S-adenosyl-L-methionine = (sulfur carrier)-H + biotin + 2 5'-deoxyadenosine + 2 L-methionine + 2 oxidized [2Fe-2S]-[ferredoxin]. It participates in cofactor biosynthesis; biotin biosynthesis; biotin from 7,8-diaminononanoate: step 2/2. Catalyzes the conversion of dethiobiotin (DTB) to biotin by the insertion of a sulfur atom into dethiobiotin via a radical-based mechanism. The chain is Biotin synthase from Gloeobacter violaceus (strain ATCC 29082 / PCC 7421).